The sequence spans 101 residues: Apolipoprotein C-II (101 aa).

An N-terminal signal peptide occupies residues 1–22 (MGTRFLLALFLVLLVLGLEVQA). Positions 66-74 (AVDERIRDM) are lipid binding. The segment at 78-101 (STAAVTTYAGIFTDQLFSMLKGEQ) is lipoprotein lipase cofactor.

This sequence belongs to the apolipoprotein C2 family. In terms of processing, proapolipoprotein C-II is synthesized as a sialic acid containing glycoprotein which is subsequently desialylated prior to its proteolytic processing. Post-translationally, proapolipoprotein C-II, the major form found in plasma undergoes proteolytic cleavage of its N-terminal hexapeptide to generate apolipoprotein C-II, which occurs as the minor form in plasma.

It localises to the secreted. Component of chylomicrons, very low-density lipoproteins (VLDL), low-density lipoproteins (LDL), and high-density lipoproteins (HDL) in plasma. Plays an important role in lipoprotein metabolism as an activator of lipoprotein lipase. Both proapolipoprotein C-II and apolipoprotein C-II can activate lipoprotein lipase. This Tupaia glis (Common tree shrew) protein is Apolipoprotein C-II (APOC2).